The primary structure comprises 289 residues: NFU1 iron-sulfur cluster scaffold homolog, mitochondrial (289 aa).

A mitochondrion-targeting transit peptide spans 1–56 (MAKLISYAKGGFLRNTRLTSRAVPQVYQHATSSRGFVHLTSSVAQSSAIHVSTPST). Residues 183-251 (IKELLDTRIR…IPEVESVEQV (69 aa)) form a nifU region. [4Fe-4S] cluster is bound by residues Cys220 and Cys223. Positions 267–289 (ERNLKQKDTSSTAPVGIGGGPAN) are disordered.

It belongs to the NifU family.

The protein resides in the mitochondrion. In terms of biological role, molecular scaffold for [Fe-S] cluster assembly of mitochondrial iron-sulfur proteins. This chain is NFU1 iron-sulfur cluster scaffold homolog, mitochondrial, found in Drosophila willistoni (Fruit fly).